A 500-amino-acid polypeptide reads, in one-letter code: Versicolorin B desaturase (500 aa).

The helical transmembrane segment at 3-23 threads the bilayer; it reads FLSLPSLVIVIPVGYLLFHLG. N-linked (GlcNAc...) asparagine glycosylation is found at Asn-243 and Asn-400. Heme is bound at residue Cys-438.

The protein belongs to the cytochrome P450 family. It depends on heme as a cofactor.

It is found in the membrane. The catalysed reaction is versicolorin B + NADPH + O2 + H(+) = versicolorin A + NADP(+) + 2 H2O. The protein operates within mycotoxin biosynthesis; aflatoxin biosynthesis. Functionally, versicolorin B desaturase; part of the gene cluster that mediates the biosynthesis of aflatoxins, a group of polyketide-derived furanocoumarins, and part of the most toxic and carcinogenic compounds among the known mycotoxins. The four major aflatoxins produced by A.parasiticus are aflatoxin B1 (AFB1), aflatoxin B2 (AFB2), aflatoxin G1 (AFG1) and aflatoxin G2 (AFG2). Within the aflatoxin pathway, the versicolorin B desaturase aflL catalyzes the conversion of versicolorin B (VERB) to versicolorin A (VERA). The biosynthesis of aflatoxins begins with the norsolorinic acid synthase aflC that combines a hexanoyl starter unit produced by the fatty acid synthase aflA/aflB and 7 malonyl-CoA extender units to synthesize the precursor NOR. The second step is the conversion of NOR to averantin and requires the norsolorinic acid ketoreductase aflD, which catalyzes the dehydration of norsolorinic acid to form (1'S)-averantin. The norsolorinic acid reductases aflE and aflF may also play a role in the conversion of NOR to AVN. The cytochrome P450 monooxygenase aflG then catalyzes the hydroxylation of AVN to 5'hydroxyaverantin (HAVN). The next step is performed by the 5'-hydroxyaverantin dehydrogenase aflH that transforms HAVN to 5'-oxoaverantin (OAVN) which is further converted to averufin (AVF) by aflK that plays a dual role in the pathway, as a 5'-oxoaverantin cyclase that mediates conversion of 5'-oxoaverantin, as well as a versicolorin B synthase in a later step in the pathway. The averufin oxidase aflI catalyzes the conversion of AVF to versiconal hemiacetal acetate (VHA). VHA is then the substrate for the versiconal hemiacetal acetate esterase aflJ to yield versiconal (VAL). Versicolorin B synthase aflK then converts VAL to versicolorin B (VERB) by closing the bisfuran ring of aflatoxin which is required for DNA-binding, thus giving to aflatoxin its activity as a mutagen. Then, the activity of the versicolorin B desaturase aflL leads to versicolorin A (VERA). A branch point starts from VERB since it can also be converted to dihydrodemethylsterigmatocystin (DMDHST), probably also by aflL, VERA being a precursor for aflatoxins B1 and G1, and DMDHST for aflatoxins B2 and G2. Next, the versicolorin reductase aflM and the cytochrome P450 monooxygenase aflN are involved in conversion of VERA to demethylsterigmatocystin (DMST). AflX and aflY seem also involved in this step, through probable aflX-mediated epoxide ring-opening step following versicolorin A oxidation and aflY-mediated Baeyer-Villiger oxidation required for the formation of the xanthone ring. The methyltransferase aflO then leads to the modification of DMST to sterigmatocystin (ST), and of DMDHST to dihydrosterigmatocystin (DHST). Both ST and DHST are then substrates of the O-methyltransferase aflP to yield O-methylsterigmatocystin (OMST) and dihydro-O-methylsterigmatocystin (DHOMST), respectively. Finally OMST is converted to aflatoxins B1 and G1, and DHOMST to aflatoxins B2 and G2, via the action of several enzymes including O-methylsterigmatocystin oxidoreductase aflQ, the cytochrome P450 monooxygenase aflU, but also the NADH-dependent flavin oxidoreductase nadA which is specifically required for the synthesis of AFG1. The protein is Versicolorin B desaturase of Aspergillus parasiticus (strain ATCC 56775 / NRRL 5862 / SRRC 143 / SU-1).